The following is a 118-amino-acid chain: Small ribosomal subunit protein uS13 (118 aa).

The tract at residues 94 to 118 (SLPVRGQRTKTNARTRKGPRKPIKK) is disordered.

This sequence belongs to the universal ribosomal protein uS13 family. In terms of assembly, part of the 30S ribosomal subunit. Forms a loose heterodimer with protein S19. Forms two bridges to the 50S subunit in the 70S ribosome.

Functionally, located at the top of the head of the 30S subunit, it contacts several helices of the 16S rRNA. In the 70S ribosome it contacts the 23S rRNA (bridge B1a) and protein L5 of the 50S subunit (bridge B1b), connecting the 2 subunits; these bridges are implicated in subunit movement. Contacts the tRNAs in the A and P-sites. The chain is Small ribosomal subunit protein uS13 from Actinobacillus pleuropneumoniae serotype 5b (strain L20).